The primary structure comprises 223 residues: Agamous-like MADS-box protein AGL11 (223 aa).

In terms of domain architecture, MADS-box spans M1–N61. In terms of domain architecture, K-box spans A87–L177.

It is found in the nucleus. Functionally, probable transcription factor involved in seed development. This chain is Agamous-like MADS-box protein AGL11, found in Vitis vinifera (Grape).